Reading from the N-terminus, the 248-residue chain is Pyridoxine 5'-phosphate synthase (248 aa).

Residue asparagine 10 participates in 3-amino-2-oxopropyl phosphate binding. Position 12–13 (12–13) interacts with 1-deoxy-D-xylulose 5-phosphate; it reads DH. 3-amino-2-oxopropyl phosphate is bound at residue arginine 21. Histidine 46 serves as the catalytic Proton acceptor. Arginine 48 and histidine 53 together coordinate 1-deoxy-D-xylulose 5-phosphate. The Proton acceptor role is filled by glutamate 73. Threonine 103 is a binding site for 1-deoxy-D-xylulose 5-phosphate. The active-site Proton donor is histidine 194. Residues glycine 195 and 216 to 217 each bind 3-amino-2-oxopropyl phosphate; that span reads GH.

Belongs to the PNP synthase family. Homooctamer; tetramer of dimers.

It is found in the cytoplasm. The catalysed reaction is 3-amino-2-oxopropyl phosphate + 1-deoxy-D-xylulose 5-phosphate = pyridoxine 5'-phosphate + phosphate + 2 H2O + H(+). It functions in the pathway cofactor biosynthesis; pyridoxine 5'-phosphate biosynthesis; pyridoxine 5'-phosphate from D-erythrose 4-phosphate: step 5/5. Its function is as follows. Catalyzes the complicated ring closure reaction between the two acyclic compounds 1-deoxy-D-xylulose-5-phosphate (DXP) and 3-amino-2-oxopropyl phosphate (1-amino-acetone-3-phosphate or AAP) to form pyridoxine 5'-phosphate (PNP) and inorganic phosphate. This chain is Pyridoxine 5'-phosphate synthase, found in Legionella pneumophila (strain Corby).